Reading from the N-terminus, the 197-residue chain is Probable GTP-binding protein EngB (197 aa).

Residues 22-194 (DLPEIAFAGR…LETIARMTGI (173 aa)) enclose the EngB-type G domain. GTP is bound by residues 30-37 (GRSNVGKS), 57-61 (GKTRL), 75-78 (DLPG), 142-145 (TKAD), and 173-175 (FST). Residues S37 and T59 each coordinate Mg(2+).

The protein belongs to the TRAFAC class TrmE-Era-EngA-EngB-Septin-like GTPase superfamily. EngB GTPase family. The cofactor is Mg(2+).

Functionally, necessary for normal cell division and for the maintenance of normal septation. This Desulfosudis oleivorans (strain DSM 6200 / JCM 39069 / Hxd3) (Desulfococcus oleovorans) protein is Probable GTP-binding protein EngB.